We begin with the raw amino-acid sequence, 368 residues long: Peptide chain release factor 2 (368 aa).

An N5-methylglutamine modification is found at Q251.

Belongs to the prokaryotic/mitochondrial release factor family. Post-translationally, methylated by PrmC. Methylation increases the termination efficiency of RF2.

The protein localises to the cytoplasm. In terms of biological role, peptide chain release factor 2 directs the termination of translation in response to the peptide chain termination codons UGA and UAA. The polypeptide is Peptide chain release factor 2 (Wolinella succinogenes (strain ATCC 29543 / DSM 1740 / CCUG 13145 / JCM 31913 / LMG 7466 / NCTC 11488 / FDC 602W) (Vibrio succinogenes)).